We begin with the raw amino-acid sequence, 337 residues long: Mannan polymerase complex subunit mnn9 (337 aa).

Residues 1-8 (MRVYNKSR) lie on the Cytoplasmic side of the membrane. A helical; Signal-anchor for type II membrane protein membrane pass occupies residues 9–29 (IVGQLLFVALGITFIYYLFTP). Residues 30–337 (SVNSNAKVQI…PYYLVFHHNE (308 aa)) lie on the Lumenal side of the membrane.

The protein belongs to the ANP1/MMN9/VAN1 family.

It localises to the endoplasmic reticulum membrane. The protein resides in the golgi apparatus membrane. It participates in protein modification; protein glycosylation. Functionally, required for the addition of the long alpha 1,6-mannose backbone of N-linked glycans on cell wall and periplasmic proteins. The sequence is that of Mannan polymerase complex subunit mnn9 from Schizosaccharomyces pombe (strain 972 / ATCC 24843) (Fission yeast).